We begin with the raw amino-acid sequence, 161 residues long: Allophycocyanin beta chain (161 aa).

Position 71 is an N4-methylasparagine (asparagine 71). Position 81 (cysteine 81) interacts with (2R,3E)-phycocyanobilin.

Belongs to the phycobiliprotein family. Heterodimer of an alpha and a beta chain. In terms of processing, contains one covalently linked phycocyanobilin chromophore.

It localises to the cellular thylakoid membrane. In terms of biological role, light-harvesting photosynthetic bile pigment-protein from the phycobiliprotein complex. Allophycocyanin has a maximum absorption at approximately 650 nanometers. This Mastigocladus laminosus (Fischerella sp.) protein is Allophycocyanin beta chain (apcB).